The chain runs to 1104 residues: MALLGKHCDIPTNGCGSERWNSTFARKDELINSLVSALDSMCSALSKLNTEVACVAVHNESVFVMGTEKGRVFLNTRKELQSDFLRFCRGPLWNDPEAGHPKKVQRCEGGGRSLPRSSLEQCSDVYLLQKMVEEVFDVLYSEAMGRATVVPLPYERLLREPGLLAVQGLPEGLAFRRPAEYDPKALMAILEHSHRIRFKLRRPPDDGGQDTKALVEMNGISLLPKGSRDCGLHGQASKVAPQDLTPTATPSSMANFLYSTSMPNHTIRELKQEVPTCPLTPSDLGMGWPVPEPHVPSTQDFSDCCGQTPAGPAGPLIQNVHASKRILFSIVHDKSEKWDPFIKEMEDINTLRECVQILFNSRYAEALGLDHMVPVPYRKIACDPEAVEIVGIPDKIPFKRPCTYGVPKLKRILEERHSIHFIIKRMFDERIFTGNKFTKDPMKLEPASPPEDTSTEVCRDSMLDLAGTAWSDMSSVSEDCGPGTSGEIAMLRPIKIEPEELDIIQVTVSDPSPTSEEMTDSLPGHLPSEDSGYGMEMPADKGPSEEPWSEERPAEESPGDVIRPLRKQVEMLFNTKYAKAIGTSEPVKVPYSKFLMHPEELFVLGLPEGISLRRPNCFGIAKLRKILEASNSIQFVIKRPELLTDGVKEPVLDTQERDSWDRLVDETPKRQGLQENYNTRLSRIDIANTLREQVQDLFNKKYGEALGIKYPVQVPYKRIKSNPGSVIIEGLPPGIPFRKPCTFGSQNLERILSVADKIKFTVTRPFQGLIPKPETKILTTGHEAGKTTRPRRLQQDTWQPDEDDANRLGEKVILREQVKELFNEKYGEALGLNRPVLVPYKLIRDSPDAVEVKGLPDDIPFRNPNTYDIHRLEKILKAREHVRMVIINQLQPFAEVCNDPKVPEEDDSNKLGKKVILREQVKELFNEKYGEALGLNRPVLVPYKLIRDSPDAVEVKGLPDDIPFRNPNTYDIHRLEKILKAREHVRMVIINQLQPFGDVCNNAKVPAKDNIPKRKRKRVSEGNSVSSSSSSSSSSSNPESVASTNQISLVVKSRGSELHPNSVWPLPLPRAGPSTAPGTGRHWALRGTQPTTEGQAHPLVLPTR.

Glycyl lysine isopeptide (Lys-Gly) (interchain with G-Cter in SUMO2) cross-links involve residues Lys27, Lys184, Lys212, Lys225, Lys238, Lys271, Lys337, Lys436, Lys439, and Lys443. The GTF2I-like 1 repeat unit spans residues 119–213 (LEQCSDVYLL…PDDGGQDTKA (95 aa)). Residues 342–436 (IKEMEDINTL…FDERIFTGNK (95 aa)) form a GTF2I-like 2 repeat. Phosphoserine is present on Ser448. The tract at residues 509 to 559 (SDPSPTSEEMTDSLPGHLPSEDSGYGMEMPADKGPSEEPWSEERPAEESPG) is disordered. Residues 538 to 555 (PADKGPSEEPWSEERPAE) show a composition bias toward basic and acidic residues. A GTF2I-like 3 repeat occupies 556–650 (ESPGDVIRPL…ELLTDGVKEP (95 aa)). Glycyl lysine isopeptide (Lys-Gly) (interchain with G-Cter in SUMO2) cross-links involve residues Lys567, Lys579, Lys588, Lys622, Lys638, Lys669, Lys709, Lys717, Lys757, Lys759, and Lys772. Residues 681-775 (LSRIDIANTL…FQGLIPKPET (95 aa)) form a GTF2I-like 4 repeat. The interval 783 to 802 (EAGKTTRPRRLQQDTWQPDE) is disordered. One copy of the GTF2I-like 5 repeat lies at 805-899 (ANRLGEKVIL…LQPFAEVCND (95 aa)). Glycyl lysine isopeptide (Lys-Gly) (interchain with G-Cter in SUMO2) cross-links involve residues Lys841 and Lys901. The GTF2I-like 6 repeat unit spans residues 908-1002 (SNKLGKKVIL…LQPFGDVCNN (95 aa)). Disordered regions lie at residues 1001 to 1044 (NNAK…VAST) and 1058 to 1104 (LHPN…LPTR). Residues 1012–1019 (PKRKRKRV) carry the Nuclear localization signal motif. Residues 1021–1043 (EGNSVSSSSSSSSSSSNPESVAS) are compositionally biased toward low complexity.

Belongs to the TFII-I family. As to quaternary structure, interacts with the retinoblastoma protein (RB1) via its C-terminus. As to expression, widely expressed.

It localises to the nucleus. May be a transcription regulator involved in cell-cycle progression and skeletal muscle differentiation. May repress GTF2I transcriptional functions, by preventing its nuclear residency, or by inhibiting its transcriptional activation. May contribute to slow-twitch fiber type specificity during myogenesis and in regenerating muscles. Binds troponin I slow-muscle fiber enhancer (USE B1). Binds specifically and with high affinity to the EFG sequences derived from the early enhancer of HOXC8. This chain is General transcription factor II-I repeat domain-containing protein 1 (Gtf2ird1), found in Mus musculus (Mouse).